Here is a 377-residue protein sequence, read N- to C-terminus: Sodium-dependent organic anion transporter (377 aa).

Residues 1-29 (MRANCSSSSACPANSSEEELPVGLEVHGN) are Extracellular-facing. A glycan (N-linked (GlcNAc...) asparagine) is linked at Asn-4. A helical membrane pass occupies residues 30-50 (LELVFTVVSTVMMGLLMFSLG). Residues 51 to 67 (CSVEIRKLWSHIRRPWG) are Cytoplasmic-facing. A helical transmembrane segment spans residues 68-88 (IAVGLLCQFGLMPFTAYLLAI). Residues 89 to 97 (SFSLKPVQA) lie on the Extracellular side of the membrane. The helical transmembrane segment at 98–118 (IAVLIMGCCPGGTISNIFTFW) threads the bilayer. The Cytoplasmic portion of the chain corresponds to 119-133 (VDGDMDLSISMTTCS). The chain crosses the membrane as a helical span at residues 134–154 (TVAALGMMPLCIYLYTWSWSL). The Extracellular segment spans residues 155–159 (QQNLT). Asn-157 is a glycosylation site (N-linked (GlcNAc...) asparagine). Residues 160–180 (IPYQNIGITLVCLTIPVAFGV) traverse the membrane as a helical segment. Topologically, residues 181–195 (YVNYRWPKQSKIILK) are cytoplasmic. A helical transmembrane segment spans residues 196–216 (IGAVVGGVLLLVVAVAGVVLA). The Extracellular segment spans residues 217–226 (KGSWNSDITL). Residues 227–247 (LTISFIFPLIGHVTGFLLALF) form a helical membrane-spanning segment. Over 248 to 266 (THQSWQRCRTISLETGAQN) the chain is Cytoplasmic. The chain crosses the membrane as a helical span at residues 267-285 (IQMCITMLQLSFTAEHLVQ). The Extracellular segment spans residues 286–290 (MLSFP). A helical membrane pass occupies residues 291–311 (LAYGLFQLIDGFLIVAAYQTY). Topologically, residues 312–377 (KRRLKNKHGK…EPVGHITSCE (66 aa)) are cytoplasmic.

Belongs to the bile acid:sodium symporter (BASS) (TC 2.A.28) family. In terms of processing, glycosylated. As to expression, highly expressed in testis, placenta and pancreas. Moderately expressed in heart, lung and mammary gland. Weakly expressed in brain, colon, kidney, liver, ovary, prostate, small intestine, spleen and thymus.

It localises to the membrane. It catalyses the reaction estrone 3-sulfate(out) + 2 Na(+)(out) = estrone 3-sulfate(in) + 2 Na(+)(in). It carries out the reaction 17beta-estradiol 3-sulfate(out) + 2 Na(+)(out) = 17beta-estradiol 3-sulfate(in) + 2 Na(+)(in). The catalysed reaction is dehydroepiandrosterone 3-sulfate(out) + 2 Na(+)(out) = dehydroepiandrosterone 3-sulfate(in) + 2 Na(+)(in). The enzyme catalyses androst-5-ene-diol 3-sulfate(out) + 2 Na(+)(out) = androst-5-ene-diol 3-sulfate(in) + 2 Na(+)(in). It catalyses the reaction pregnenolone sulfate(out) + 2 Na(+)(out) = pregnenolone sulfate(in) + 2 Na(+)(in). It carries out the reaction taurolithocholate 3-sulfate(out) + 2 Na(+)(out) = taurolithocholate 3-sulfate(in) + 2 Na(+)(in). The catalysed reaction is androsterone 3alpha-sulfate(out) + 2 Na(+)(out) = androsterone 3alpha-sulfate(in) + 2 Na(+)(in). The enzyme catalyses 5alpha-dihydrotestosterone sulfate(out) + 2 Na(+)(out) = 5alpha-dihydrotestosterone sulfate(in) + 2 Na(+)(in). It catalyses the reaction 17beta-estradiol 17-sulfate(out) + 2 Na(+)(out) = 17beta-estradiol 17-sulfate(in) + 2 Na(+)(in). It carries out the reaction 17alpha-hydroxypregnenolone 3-sulfate(out) + 2 Na(+)(out) = 17alpha-hydroxypregnenolone 3-sulfate(in) + 2 Na(+)(in). The catalysed reaction is epiandrosterone 3-sulfate(out) + 2 Na(+)(out) = epiandrosterone 3-sulfate(in) + 2 Na(+)(in). The enzyme catalyses epitestosterone 17-sulfate(out) + 2 Na(+)(out) = epitestosterone 17-sulfate(in) + 2 Na(+)(in). It catalyses the reaction testosterone 17-sulfate(out) + 2 Na(+)(out) = testosterone 17-sulfate(in) + 2 Na(+)(in). It carries out the reaction 16alpha-hydroxydehydroepiandrosterone 3-sulfate(out) + 2 Na(+)(out) = 16alpha-hydroxydehydroepiandrosterone 3-sulfate(in) + 2 Na(+)(in). Transports sulfoconjugated steroid hormones from the extracellular compartment into the cytosol in a sodium-dependent manner without hydrolysis. Steroid sulfate hormones are commonly considered to be biologically inactive metabolites, that may be activated by steroid sulfatases into free steroids. May play an important role by delivering sulfoconjugated steroids to specific target cells in reproductive organs. May play a role transporting the estriol precursor 16alpha-hydroxydehydroepiandrosterone 3-sulfate (16a-OH-DHEAS) at the fetal blood vessel endothelium. Can also transport other sulfoconjugated molecules such as taurolithocholic acid-3-sulfate and sulfoconjugated pyrenes. In Homo sapiens (Human), this protein is Sodium-dependent organic anion transporter (SLC10A6).